The primary structure comprises 251 residues: Small ribosomal subunit protein uS2 (251 aa).

It belongs to the universal ribosomal protein uS2 family.

This is Small ribosomal subunit protein uS2 from Nitrosomonas eutropha (strain DSM 101675 / C91 / Nm57).